The primary structure comprises 203 residues: MFEGPVQDLIDELGKLPGIGPKSAQRIAFHLLSVEPSDIDRLTGVLAKVRDGVRFCAVCGNVSDNERCRICSDIRRDASVVCIVEEPKDIQAVERTREFRGRYHVLGGALDPLSGIGPDQLRIRELLSRIGERVDDVDVTEVIIATDPNTEGEATATYLVRMLRDIPGLTVTRIASGLPMGGDLEFADELTLGRALAGRRVLA.

The C4-type zinc-finger motif lies at 56 to 71 (CAVCGNVSDNERCRIC). Residues 79 to 179 (SVVCIVEEPK…TVTRIASGLP (101 aa)) form the Toprim domain.

This sequence belongs to the RecR family.

Functionally, may play a role in DNA repair. It seems to be involved in an RecBC-independent recombinational process of DNA repair. It may act with RecF and RecO. This is Recombination protein RecR from Mycobacterium bovis (strain ATCC BAA-935 / AF2122/97).